The sequence spans 196 residues: Probable GTP-binding protein EngB (196 aa).

The region spanning 24–196 is the EngB-type G domain; it reads ELSEVALSGR…IWNLIEPYIS (173 aa). GTP-binding positions include 32-39, 59-63, 77-80, 144-147, and 176-178; these read GRSNVGKS, GKTQT, DVPG, TKED, and YSS. Residues serine 39 and threonine 61 each coordinate Mg(2+).

This sequence belongs to the TRAFAC class TrmE-Era-EngA-EngB-Septin-like GTPase superfamily. EngB GTPase family. The cofactor is Mg(2+).

Functionally, necessary for normal cell division and for the maintenance of normal septation. This chain is Probable GTP-binding protein EngB, found in Staphylococcus aureus (strain MW2).